A 142-amino-acid polypeptide reads, in one-letter code: Large ribosomal subunit protein uL16 (142 aa).

This sequence belongs to the universal ribosomal protein uL16 family. As to quaternary structure, part of the 50S ribosomal subunit.

Its function is as follows. Binds 23S rRNA and is also seen to make contacts with the A and possibly P site tRNAs. The chain is Large ribosomal subunit protein uL16 from Mycoplasmopsis pulmonis (strain UAB CTIP) (Mycoplasma pulmonis).